The sequence spans 161 residues: MKDLLPDLCDLYPEKLQIAEPIFTSYGKRSHFYGEVVTVSCFEDNSRVRELVAENGKGKVMVIDGGGSKRRALLGDMLAEKAVDNGWEGFVINGAIRDIAAQSQLNIGIHALCAHPMPTEKRGLGDLGKTLRFAGMTIAQGDYIYCDLNGIVVSKQPLALP.

Substrate contacts are provided by residues 75–78 (GDML) and arginine 97. Residue aspartate 98 participates in a divalent metal cation binding.

Belongs to the class II aldolase/RraA-like family. Homotrimer. The cofactor is a divalent metal cation.

It catalyses the reaction 4-hydroxy-4-methyl-2-oxoglutarate = 2 pyruvate. It carries out the reaction oxaloacetate + H(+) = pyruvate + CO2. In terms of biological role, catalyzes the aldol cleavage of 4-hydroxy-4-methyl-2-oxoglutarate (HMG) into 2 molecules of pyruvate. Also contains a secondary oxaloacetate (OAA) decarboxylase activity due to the common pyruvate enolate transition state formed following C-C bond cleavage in the retro-aldol and decarboxylation reactions. The sequence is that of Putative 4-hydroxy-4-methyl-2-oxoglutarate aldolase from Marinomonas sp. (strain MWYL1).